Here is a 217-residue protein sequence, read N- to C-terminus: Large ribosomal subunit protein bL25 (217 aa).

A compositionally biased stretch (low complexity) spans 195–211 (PAEGAAAAPAKGAAKGA). Residues 195–217 (PAEGAAAAPAKGAAKGAAKGGKK) are disordered.

It belongs to the bacterial ribosomal protein bL25 family. CTC subfamily. As to quaternary structure, part of the 50S ribosomal subunit; part of the 5S rRNA/L5/L18/L25 subcomplex. Contacts the 5S rRNA. Binds to the 5S rRNA independently of L5 and L18.

Functionally, this is one of the proteins that binds to the 5S RNA in the ribosome where it forms part of the central protuberance. This Acidiphilium cryptum (strain JF-5) protein is Large ribosomal subunit protein bL25.